The following is a 767-amino-acid chain: Protein transport protein Sec23A (767 aa).

Zn(2+) contacts are provided by Cys-61, Cys-66, Cys-85, and Cys-88. The stretch at 634-720 is one Gelsolin-like repeat; the sequence is PEPVLLDSSS…EHGGSQARFL (87 aa).

This sequence belongs to the SEC23/SEC24 family. SEC23 subfamily. In terms of assembly, COPII is composed of at least five proteins: the Sec23/24 complex, the Sec13/31 complex and Sar1.

The protein localises to the cytoplasmic vesicle. Its subcellular location is the COPII-coated vesicle membrane. It localises to the endoplasmic reticulum membrane. The protein resides in the cytoplasm. It is found in the cytosol. In terms of biological role, component of the coat protein complex II (COPII) which promotes the formation of transport vesicles from the endoplasmic reticulum (ER). The coat has two main functions, the physical deformation of the endoplasmic reticulum membrane into vesicles and the selection of cargo molecules for their transport to the Golgi complex. The polypeptide is Protein transport protein Sec23A (Gallus gallus (Chicken)).